Reading from the N-terminus, the 183-residue chain is Histone deacetylase complex subunit SAP30L (183 aa).

Methionine 1 is subject to N-acetylmethionine. Residues 1–10 show a composition bias toward acidic residues; the sequence is MNGFSTEEDS. Positions 1 to 23 are disordered; the sequence is MNGFSTEEDSREGPPAAPAAAAP. 2 disulfide bridges follow: cysteine 29–cysteine 30 and cysteine 38–cysteine 74. The Atypical zinc finger occupies 29–77; sequence CCLIEDGERCVRPAGNASFSKRVQKSISQKKLKLDIDKSVRHLYICDFH. Residue lysine 49 forms a Glycyl lysine isopeptide (Lys-Gly) (interchain with G-Cter in SUMO2) linkage. Residues 85 to 105 form a disordered region; that stretch reads RNKRKRKTSDDGGDSPEHDTD. The Nuclear localization signal (NLS) motif lies at 86–91; it reads NKRKRK. Positions 88–90 are important for DNA and phosphoinositide binding; sequence RKR. At threonine 92 the chain carries Phosphothreonine. Phosphoserine occurs at positions 93 and 99. Threonine 104 carries the phosphothreonine modification. Glycyl lysine isopeptide (Lys-Gly) (interchain with G-Cter in SUMO2) cross-links involve residues lysine 155, lysine 166, and lysine 175.

This sequence belongs to the SAP30 family. As to quaternary structure, interacts with components of the histone deacetylase complex SIN3A, HDAC1 and HDAC2. Binds histones and nucleosomes. Interacts with FEZ1. In terms of tissue distribution, detected in brain and ovary, and at lower levels in heart, small intestine, lung, kidney, skeletal muscle, stomach and spleen (at protein level). Ubiquitous; expressed in all tissues tested with highest levels in testis.

The protein localises to the nucleus. Its subcellular location is the nucleolus. Functionally, functions as a transcription repressor, probably via its interaction with histone deacetylase complexes. Involved in the functional recruitment of the class 1 Sin3-histone deacetylase complex (HDAC) to the nucleolus. Binds DNA, apparently without sequence-specificity, and bends bound double-stranded DNA. Binds phosphoinositol phosphates (phosphoinositol 3-phosphate, phosphoinositol 4-phosphate and phosphoinositol 5-phosphate) via the same basic sequence motif that mediates DNA binding and nuclear import. Functions as a transcription repressor; isoform 2 has lower transcription repressor activity than isoform 1 and isoform 3. In terms of biological role, functions as a transcription repressor; its activity is marginally lower than that of isoform 1. The chain is Histone deacetylase complex subunit SAP30L (SAP30L) from Homo sapiens (Human).